Here is a 437-residue protein sequence, read N- to C-terminus: Enolase 2 (437 aa).

Q162 contacts (2R)-2-phosphoglycerate. E204 serves as the catalytic Proton donor. Mg(2+) contacts are provided by D251, E297, and D324. 4 residues coordinate (2R)-2-phosphoglycerate: K349, R378, S379, and K400. The active-site Proton acceptor is K349.

This sequence belongs to the enolase family. Mg(2+) serves as cofactor.

It localises to the cytoplasm. The protein resides in the secreted. The protein localises to the cell surface. It catalyses the reaction (2R)-2-phosphoglycerate = phosphoenolpyruvate + H2O. It functions in the pathway carbohydrate degradation; glycolysis; pyruvate from D-glyceraldehyde 3-phosphate: step 4/5. In terms of biological role, catalyzes the reversible conversion of 2-phosphoglycerate (2-PG) into phosphoenolpyruvate (PEP). It is essential for the degradation of carbohydrates via glycolysis. The polypeptide is Enolase 2 (Chlorobaculum tepidum (strain ATCC 49652 / DSM 12025 / NBRC 103806 / TLS) (Chlorobium tepidum)).